The sequence spans 545 residues: CTP synthase (545 aa).

The interval 1–266 is amidoligase domain; sequence MTTRYIFVTG…DELVTKRFGI (266 aa). A CTP-binding site is contributed by S14. S14 lines the UTP pocket. Residues 15–20 and D72 each bind ATP; that span reads SLGKGI. Residues D72 and E140 each contribute to the Mg(2+) site. Residues 147–149, 187–192, and K223 each bind CTP; these read DIE and KTKPTQ. UTP contacts are provided by residues 187–192 and K223; that span reads KTKPTQ. ATP is bound at residue 239–241; sequence KDV. Positions 291–542 constitute a Glutamine amidotransferase type-1 domain; sequence TIGMVGKYIE…VAAAAAHQKR (252 aa). G352 is a binding site for L-glutamine. C379 functions as the Nucleophile; for glutamine hydrolysis in the catalytic mechanism. Residues 380–383, E403, and R470 each bind L-glutamine; that span reads LGMQ. Residues H515 and E517 contribute to the active site.

This sequence belongs to the CTP synthase family. As to quaternary structure, homotetramer.

The catalysed reaction is UTP + L-glutamine + ATP + H2O = CTP + L-glutamate + ADP + phosphate + 2 H(+). It catalyses the reaction L-glutamine + H2O = L-glutamate + NH4(+). It carries out the reaction UTP + NH4(+) + ATP = CTP + ADP + phosphate + 2 H(+). It participates in pyrimidine metabolism; CTP biosynthesis via de novo pathway; CTP from UDP: step 2/2. Allosterically activated by GTP, when glutamine is the substrate; GTP has no effect on the reaction when ammonia is the substrate. The allosteric effector GTP functions by stabilizing the protein conformation that binds the tetrahedral intermediate(s) formed during glutamine hydrolysis. Inhibited by the product CTP, via allosteric rather than competitive inhibition. Functionally, catalyzes the ATP-dependent amination of UTP to CTP with either L-glutamine or ammonia as the source of nitrogen. Regulates intracellular CTP levels through interactions with the four ribonucleotide triphosphates. This is CTP synthase from Shewanella woodyi (strain ATCC 51908 / MS32).